A 484-amino-acid polypeptide reads, in one-letter code: Glutamate--tRNA ligase (484 aa).

A 'HIGH' region motif is present at residues 11–21; sequence PSPTGYLHIGN. The 'KMSKS' region motif lies at 252–256; that stretch reads KLSKR. Residue Lys255 participates in ATP binding.

This sequence belongs to the class-I aminoacyl-tRNA synthetase family. Glutamate--tRNA ligase type 1 subfamily. Monomer.

It is found in the cytoplasm. It carries out the reaction tRNA(Glu) + L-glutamate + ATP = L-glutamyl-tRNA(Glu) + AMP + diphosphate. Functionally, catalyzes the attachment of glutamate to tRNA(Glu) in a two-step reaction: glutamate is first activated by ATP to form Glu-AMP and then transferred to the acceptor end of tRNA(Glu). The polypeptide is Glutamate--tRNA ligase (Staphylococcus aureus (strain Newman)).